The chain runs to 389 residues: D-alanyl-D-alanine carboxypeptidase DacF (389 aa).

An N-terminal signal peptide occupies residues 1 to 23 (MKRLLSTLLIGIMLLTFAPSAFA). The active-site Acyl-ester intermediate is S64. K67 serves as the catalytic Proton acceptor. S124 is an active-site residue. K230 contributes to the substrate binding site.

Belongs to the peptidase S11 family.

It localises to the secreted. The catalysed reaction is Preferential cleavage: (Ac)2-L-Lys-D-Ala-|-D-Ala. Also transpeptidation of peptidyl-alanyl moieties that are N-acyl substituents of D-alanine.. Its pathway is cell wall biogenesis; peptidoglycan biosynthesis. Functionally, removes C-terminal D-alanyl residues from sugar-peptide cell wall precursors. The sequence is that of D-alanyl-D-alanine carboxypeptidase DacF (dacF) from Bacillus subtilis (strain 168).